The chain runs to 286 residues: Cytosolic 5'-nucleotidase 3 (286 aa).

Asp-38 serves as the catalytic Nucleophile. Residues Asp-38 and Asp-40 each coordinate Mg(2+). Asp-40 functions as the Proton donor in the catalytic mechanism. Substrate-binding positions include Glu-85, Ser-106, 153-154, and Lys-202; that span reads SA. Asp-227 is a Mg(2+) binding site.

It belongs to the pyrimidine 5'-nucleotidase family.

The protein localises to the cytoplasm. It carries out the reaction a ribonucleoside 5'-phosphate + H2O = a ribonucleoside + phosphate. Can act both as nucleotidase and as phosphotransferase. This chain is Cytosolic 5'-nucleotidase 3 (nt5c3), found in Danio rerio (Zebrafish).